The primary structure comprises 78 residues: Small ribosomal subunit protein bS18 (78 aa).

It belongs to the bacterial ribosomal protein bS18 family. Part of the 30S ribosomal subunit. Forms a tight heterodimer with protein bS6.

Its function is as follows. Binds as a heterodimer with protein bS6 to the central domain of the 16S rRNA, where it helps stabilize the platform of the 30S subunit. The chain is Small ribosomal subunit protein bS18 from Pseudothermotoga lettingae (strain ATCC BAA-301 / DSM 14385 / NBRC 107922 / TMO) (Thermotoga lettingae).